Reading from the N-terminus, the 726-residue chain is Catalase-peroxidase (726 aa).

The interval 1 to 33 (MSTTDDTHNTLSAGKCPFHQGGHDRSAGAGTAS) is disordered. The tryptophyl-tyrosyl-methioninium (Trp-Tyr) (with M-252) cross-link spans 105–226 (WHGAGTYRSI…LGATEMGLIY (122 aa)). The active-site Proton acceptor is the H106. The tryptophyl-tyrosyl-methioninium (Tyr-Met) (with W-105) cross-link spans 226–252 (YVNPEGPDHSGEPLSAAAAIRATFGNM). Position 267 (H267) interacts with heme b.

Belongs to the peroxidase family. Peroxidase/catalase subfamily. In terms of assembly, homodimer or homotetramer. The cofactor is heme b. In terms of processing, formation of the three residue Trp-Tyr-Met cross-link is important for the catalase, but not the peroxidase activity of the enzyme.

The enzyme catalyses H2O2 + AH2 = A + 2 H2O. It carries out the reaction 2 H2O2 = O2 + 2 H2O. Bifunctional enzyme with both catalase and broad-spectrum peroxidase activity. In Salmonella arizonae (strain ATCC BAA-731 / CDC346-86 / RSK2980), this protein is Catalase-peroxidase.